Reading from the N-terminus, the 58-residue chain is uncharacterized protein (58 aa).

A helical membrane pass occupies residues 12–32 (VALVYISVYFFSCISLIVYFF).

The protein resides in the membrane. This is an uncharacterized protein from Saccharomyces cerevisiae (strain ATCC 204508 / S288c) (Baker's yeast).